The primary structure comprises 246 residues: Dof zinc finger protein DOF4.7 (246 aa).

Composition is skewed to polar residues over residues 1 to 12 (MMTSSHQSNTTG) and 27 to 37 (QINNKEPSPAT). The interval 1 to 39 (MMTSSHQSNTTGFKPRRIKTTAKPPRQINNKEPSPATQP) is disordered. The segment at 41-95 (LKCPRCDSVNTKFCYYNNYSLSQPRHYCKNCRRYWTRGGALRNVPIGGSTRNKNK) adopts a Dof-type zinc-finger fold. Positions 43, 46, 68, and 71 each coordinate Zn(2+). A disordered region spans residues 216 to 235 (GGATSGNHEDNDDGEGNLGN).

In terms of assembly, interacts with ZFP2. In terms of tissue distribution, highly expressed at the base of all organs of the flower, especially in the abscission zone (AZ) of petals, stamens and sepals. Expressed at low levels in sepals, filaments, stigmatic papillae, tips of young siliques, and at the base of pedicels and leaf trichomes.

It is found in the nucleus. Its function is as follows. Transcription factor that binds specifically to a 5'-AA[AG]G-3' consensus core sequence. Involved in the negative regulation of floral organ abscission by binding to the typical DOF 5'-AAAG-3' sequences in the promoter of ADPG2/PGAZAT, and by down-regulating its expression. ADPG2/PGAZAT is an abscission-related and cell wall hydrolyzing polygalacturonase. May act through the interaction with ZFP2, an abscission-related transcription factor. This Arabidopsis thaliana (Mouse-ear cress) protein is Dof zinc finger protein DOF4.7.